We begin with the raw amino-acid sequence, 344 residues long: Trace amine-associated receptor 8c (344 aa).

Over 1-36 (MTSNFSQATLQLCYENVNASCIKTPYSPGLRVLLYM) the chain is Extracellular. 2 N-linked (GlcNAc...) asparagine glycosylation sites follow: Asn4 and Asn18. Intrachain disulfides connect Cys21–Cys185 and Cys96–Cys189. A helical transmembrane segment spans residues 37–57 (VFGFGAVLAVCGNLLVVISVL). At 58 to 67 (HFKQLHSPAN) the chain is on the cytoplasmic side. The helical transmembrane segment at 68-88 (FLIASLASADFLVGISVMPFS) threads the bilayer. Residues 89–102 (MVRSIESCWYFGDT) lie on the Extracellular side of the membrane. A helical transmembrane segment spans residues 103 to 127 (FCSLHSCCDVAFCYSSALHLCFISV). Residues 128-146 (DRYIAVTDPLVYPTKFTVS) lie on the Cytoplasmic side of the membrane. Residues 147 to 167 (VSGICISISWILPLVYSSAVF) traverse the membrane as a helical segment. The Extracellular segment spans residues 168–196 (YTGISAMGIENLVSALNCVGGCQVVVNQD). The helical transmembrane segment at 197–217 (WVLISFLLFFIPTLVMIILYS) threads the bilayer. Topologically, residues 218–260 (KIFLVAKQQAVKIETSVSGSKGESSLESHKARVAKRERKAAKT) are cytoplasmic. The chain crosses the membrane as a helical span at residues 261-281 (LGVTVLAFIVSWLPYTIDTLI). Residues 282–295 (DAFMGFITPAYVYE) are Extracellular-facing. A helical membrane pass occupies residues 296–319 (FCCWSAYYNSAMNPLIYAFFYPWF). At 320 to 344 (RKAMKLILSGKILKGHSSTTSLFSE) the chain is on the cytoplasmic side.

The protein belongs to the G-protein coupled receptor 1 family.

The protein localises to the cell membrane. In terms of biological role, olfactory receptor activated by trace amines, such as N-methylpiperidine and N,N-dimethylcyclohexylamine. Trace amine compounds are enriched in animal body fluids and act on trace amine-associated receptors (TAARs) to elicit both intraspecific and interspecific innate behaviors. Ligand-binding causes a conformation change that triggers signaling via G(s)-class of G alpha proteins (GNAL or GNAS). The polypeptide is Trace amine-associated receptor 8c (Rattus norvegicus (Rat)).